The sequence spans 691 residues: Ribonuclease J (691 aa).

The tract at residues 1 to 89 (MTDNNHYENN…TRNYAKEELD (89 aa)) is disordered. The interval 1–132 (MTDNNHYENN…KIQVEHLNPH (132 aa)) is loss of region decreases protein stability, still able to interact with RhpA, but has decreased RNase activity even on ssRNA. Positions 10 to 19 (NESNENSSEN) are enriched in low complexity. Positions 41-57 (RENAQKNGESSHHEAPS) are enriched in basic and acidic residues. Residues 58 to 82 (HHKKEHRPNKKPNNHHKQKHAKTRN) show a composition bias toward basic residues. 2 positions are modified to N6-acetyllysine: Lys134 and Lys140. Positions 208, 210, 212, 213, 277, and 299 each coordinate Zn(2+). Residues Lys323, Lys337, and Lys397 each carry the N6-acetyllysine modification. 500 to 504 (HVSGH) provides a ligand contact to substrate. Lys511 is subject to N6-acetyllysine. Position 526 (His526) interacts with Zn(2+). Residues Lys547, Lys634, and Lys649 each carry the N6-acetyllysine modification.

Belongs to the metallo-beta-lactamase superfamily. RNA-metabolizing metallo-beta-lactamase-like family. Bacterial RNase J subfamily. Homodimer. Homotetramer; dimer of homodimers. Interacts with RNA helicase RphA, might be a member of a minimal RNA degradosome complex. Requires Zn(2+) as cofactor. Acetylated on nine lysine residues. Some of the residues are acetylated by multiple different mechanisms. RimL is partially responsible for the acetylation of Lys-323, Lys-397 and Lys-649. HPB8_1270 homolog is partially responsible for the acetylation of Lys-323, Lys-397, Lys-511 and Lys-649. Acetyl-phosphate-mediated non-enzymatic acetylation pathway takes part in the acetylation of Lys-134, Lys-323, Lys-397, Lys-511 and Lys-649. Acetylation of the remaining residues Lys-140, Lys-337, Lys-547 and Lys-634 occurs by a yet undetermined mechanism. Acetylation on a number of these residues is important for growth regulation and proper cell morphology.

It localises to the cytoplasm. Catalytic activity is regulated by the balance between homodimers and homotetramers, with homotetramers being the active forms of this enzyme. Acetylation allosterically regulates the homooligomerization state and hence the catalytic activity. Functionally, an RNase that has 5'-3' exoribonuclease and endoribonuclease activity. Degrades 5'-monophosphorylated ssRNA and dsRNA, considerably more active on ssRNA. Association with RhpA significantly increases the dsRNase activity. Degrades RNA substrate with hairpin structures at both ends with low activity, but presence of RhpA significantly increases the activity on this substrate. Stimulates ATPase activity of RNA helicase RhpA. Involved in stabilization of mRNA but apparently not rRNA. This Helicobacter pylori (strain B128) protein is Ribonuclease J.